The chain runs to 252 residues: MNKFEDIRGVAFDLDGTLVDSAPGLAAAVDMALYALELPIAGEERVITWIGNGADVLMERALTWARQERATQRKTMGKPPVDDDIPAEEQVRILRKLFDRYYGEVAEEGTFLFPHVADTLGALQAKGLPLGLVTNKPTPFVAPLLEALDIAKYFSVVIGGDDVQNKKPHPDPLLLVAERMGIAPQQMLFVGDSRNDIQAAKAAGCPSVGLTYGYNYGEAIDLSQPDVIYQSINDLLPALGLPHSENQESKND.

Residue aspartate 13 is the Nucleophile of the active site. Aspartate 13, aspartate 15, and aspartate 192 together coordinate Mg(2+).

It belongs to the HAD-like hydrolase superfamily. CbbY/CbbZ/Gph/YieH family. As to quaternary structure, monomer. The cofactor is Mg(2+). Chloride is required as a cofactor.

The catalysed reaction is 2-phosphoglycolate + H2O = glycolate + phosphate. The protein operates within organic acid metabolism; glycolate biosynthesis; glycolate from 2-phosphoglycolate: step 1/1. In terms of biological role, specifically catalyzes the dephosphorylation of 2-phosphoglycolate. Is involved in the dissimilation of the intracellular 2-phosphoglycolate formed during the DNA repair of 3'-phosphoglycolate ends, a major class of DNA lesions induced by oxidative stress. This is Phosphoglycolate phosphatase from Shigella sonnei (strain Ss046).